Here is a 230-residue protein sequence, read N- to C-terminus: Cytochrome c oxidase subunit 2 (230 aa).

Over 1 to 14 the chain is Mitochondrial intermembrane; it reads MAHPTQLGFQDAAS. Residues 15-45 traverse the membrane as a helical segment; sequence PVMEELLHFHDHALMIVFLISTLVLYIIIAM. Topologically, residues 46–59 are mitochondrial matrix; sequence VSTKLTNKYILDSQ. The chain crosses the membrane as a helical span at residues 60–87; that stretch reads EIEIVWTILPAVILVLIALPSLRILYLM. Over 88-230 the chain is Mitochondrial intermembrane; sequence DEINDPHLTI…NWSSLMLEDA (143 aa). Cu cation is bound by residues His-161, Cys-196, Glu-198, Cys-200, His-204, and Met-207. Glu-198 lines the Mg(2+) pocket.

It belongs to the cytochrome c oxidase subunit 2 family. In terms of assembly, component of the cytochrome c oxidase (complex IV, CIV), a multisubunit enzyme composed of 14 subunits. The complex is composed of a catalytic core of 3 subunits MT-CO1, MT-CO2 and MT-CO3, encoded in the mitochondrial DNA, and 11 supernumerary subunits COX4I, COX5A, COX5B, COX6A, COX6B, COX6C, COX7A, COX7B, COX7C, COX8 and NDUFA4, which are encoded in the nuclear genome. The complex exists as a monomer or a dimer and forms supercomplexes (SCs) in the inner mitochondrial membrane with NADH-ubiquinone oxidoreductase (complex I, CI) and ubiquinol-cytochrome c oxidoreductase (cytochrome b-c1 complex, complex III, CIII), resulting in different assemblies (supercomplex SCI(1)III(2)IV(1) and megacomplex MCI(2)III(2)IV(2)). Found in a complex with TMEM177, COA6, COX18, COX20, SCO1 and SCO2. Interacts with TMEM177 in a COX20-dependent manner. Interacts with COX20. Interacts with COX16. It depends on Cu cation as a cofactor.

The protein localises to the mitochondrion inner membrane. The enzyme catalyses 4 Fe(II)-[cytochrome c] + O2 + 8 H(+)(in) = 4 Fe(III)-[cytochrome c] + 2 H2O + 4 H(+)(out). In terms of biological role, component of the cytochrome c oxidase, the last enzyme in the mitochondrial electron transport chain which drives oxidative phosphorylation. The respiratory chain contains 3 multisubunit complexes succinate dehydrogenase (complex II, CII), ubiquinol-cytochrome c oxidoreductase (cytochrome b-c1 complex, complex III, CIII) and cytochrome c oxidase (complex IV, CIV), that cooperate to transfer electrons derived from NADH and succinate to molecular oxygen, creating an electrochemical gradient over the inner membrane that drives transmembrane transport and the ATP synthase. Cytochrome c oxidase is the component of the respiratory chain that catalyzes the reduction of oxygen to water. Electrons originating from reduced cytochrome c in the intermembrane space (IMS) are transferred via the dinuclear copper A center (CU(A)) of subunit 2 and heme A of subunit 1 to the active site in subunit 1, a binuclear center (BNC) formed by heme A3 and copper B (CU(B)). The BNC reduces molecular oxygen to 2 water molecules using 4 electrons from cytochrome c in the IMS and 4 protons from the mitochondrial matrix. This is Cytochrome c oxidase subunit 2 (mt-co2) from Carassius auratus (Goldfish).